A 335-amino-acid polypeptide reads, in one-letter code: Galactinol synthase 2 (335 aa).

Residue Lys103 is part of the active site. The Mn(2+) site is built by Asp119, Asp121, and His257.

This sequence belongs to the glycosyltransferase 8 family. Galactosyltransferase subfamily. The cofactor is a divalent metal cation. Accumulates in mature seeds.

The protein localises to the cytoplasm. The enzyme catalyses myo-inositol + UDP-alpha-D-galactose = alpha-D-galactosyl-(1-&gt;3)-1D-myo-inositol + UDP + H(+). Galactinol synthase involved in the biosynthesis of raffinose family oligosaccharides (RFOs) that function as osmoprotectants. Promotes stress tolerance of factors such as drought, chilling, salinity and methylviologen (MV), a superoxide radical generating drug, by mediating an increase in levels of the endogenous osmoprotective compounds, galactinol and raffinose. In Arabidopsis thaliana (Mouse-ear cress), this protein is Galactinol synthase 2 (GOLS2).